Consider the following 348-residue polypeptide: Mannonate dehydratase (348 aa).

This sequence belongs to the mannonate dehydratase family. It depends on Fe(2+) as a cofactor. Mn(2+) is required as a cofactor.

The enzyme catalyses D-mannonate = 2-dehydro-3-deoxy-D-gluconate + H2O. It participates in carbohydrate metabolism; pentose and glucuronate interconversion. Its function is as follows. Catalyzes the dehydration of D-mannonate. This Streptococcus agalactiae serotype III (strain NEM316) protein is Mannonate dehydratase.